A 481-amino-acid chain; its full sequence is Polygalacturonase QRT3 (481 aa).

Positions 1–27 are cleaved as a signal peptide; that stretch reads MELRKSQVAMPVFLAIMSLMVSQVVFA. PbH1 repeat units lie at residues 203–226, 261–282, and 356–377; these read SLRT…LVKS, GNDN…MVSG, and IRGV…QIVQ. N-linked (GlcNAc...) asparagine glycans are attached at residues Asn-415 and Asn-455.

This sequence belongs to the glycosyl hydrolase 28 family. In terms of tissue distribution, expressed in the tapetum cells in the anthers and in the ovules of open flowers.

It localises to the secreted. The protein resides in the cell wall. It carries out the reaction (1,4-alpha-D-galacturonosyl)n+m + H2O = (1,4-alpha-D-galacturonosyl)n + (1,4-alpha-D-galacturonosyl)m.. Its function is as follows. Polygalacturonase required for degrading the pollen mother cell wall during microspore development. The sequence is that of Polygalacturonase QRT3 (QRT3) from Arabidopsis thaliana (Mouse-ear cress).